A 380-amino-acid polypeptide reads, in one-letter code: Chaperone protein DnaJ 2 (380 aa).

Residues 10-75 (DYYKILGVSK…KKRKEYDQAR (66 aa)) enclose the J domain. Basic and acidic residues predominate over residues 32–56 (KIARDNHPDSHPGDKAAEARFKEAS). The segment at 32-63 (KIARDNHPDSHPGDKAAEARFKEASEANDVLS) is disordered. The CR-type zinc finger occupies 151 to 230 (GTTVTMDMVS…CHGSGRAKST (80 aa)). Positions 164, 167, 181, 184, 204, 207, 218, and 221 each coordinate Zn(2+). 4 CXXCXGXG motif repeats span residues 164 to 171 (CQACRGTG), 181 to 188 (CSTCQGSG), 204 to 211 (CPDCHGRG), and 218 to 225 (CQVCHGSG).

This sequence belongs to the DnaJ family. As to quaternary structure, homodimer. The cofactor is Zn(2+).

Its subcellular location is the cytoplasm. Functionally, participates actively in the response to hyperosmotic and heat shock by preventing the aggregation of stress-denatured proteins and by disaggregating proteins, also in an autonomous, DnaK-independent fashion. Unfolded proteins bind initially to DnaJ; upon interaction with the DnaJ-bound protein, DnaK hydrolyzes its bound ATP, resulting in the formation of a stable complex. GrpE releases ADP from DnaK; ATP binding to DnaK triggers the release of the substrate protein, thus completing the reaction cycle. Several rounds of ATP-dependent interactions between DnaJ, DnaK and GrpE are required for fully efficient folding. Also involved, together with DnaK and GrpE, in the DNA replication of plasmids through activation of initiation proteins. The chain is Chaperone protein DnaJ 2 from Cutibacterium acnes (strain DSM 16379 / KPA171202) (Propionibacterium acnes).